We begin with the raw amino-acid sequence, 26 residues long: Acyl carrier protein (26 aa).

Residues 2–26 (SDTATRVQKIVVEHLGVESDKVTQE) form the Carrier domain.

The protein belongs to the acyl carrier protein (ACP) family. 4'-phosphopantetheine is transferred from CoA to a specific serine of apo-ACP by AcpS. This modification is essential for activity because fatty acids are bound in thioester linkage to the sulfhydryl of the prosthetic group.

It is found in the cytoplasm. It participates in lipid metabolism; fatty acid biosynthesis. Carrier of the growing fatty acid chain in fatty acid biosynthesis. In Erythrobacter longus, this protein is Acyl carrier protein (acpP).